A 109-amino-acid chain; its full sequence is MKNKRVIKKNFEFQEIINYKKTIKNFCFIIYYKDNDQSYLKYGISVGKKIGNAVVRNKVKRQIRMILRQNINEIGTISKDVIILVRKSVLKLKYATLSKSLIKLIKEIK.

The protein belongs to the RnpA family. In terms of assembly, consists of a catalytic RNA component (M1 or rnpB) and a protein subunit.

It catalyses the reaction Endonucleolytic cleavage of RNA, removing 5'-extranucleotides from tRNA precursor.. Its function is as follows. RNaseP catalyzes the removal of the 5'-leader sequence from pre-tRNA to produce the mature 5'-terminus. It can also cleave other RNA substrates such as 4.5S RNA. The protein component plays an auxiliary but essential role in vivo by binding to the 5'-leader sequence and broadening the substrate specificity of the ribozyme. The chain is Ribonuclease P protein component from Mycoplasma mycoides subsp. mycoides SC (strain CCUG 32753 / NCTC 10114 / PG1).